A 451-amino-acid polypeptide reads, in one-letter code: NADP-specific glutamate dehydrogenase (451 aa).

The active site involves Lys-113. Residue Ser-252 is modified to Phosphoserine.

Belongs to the Glu/Leu/Phe/Val dehydrogenases family. Homohexamer.

The enzyme catalyses L-glutamate + NADP(+) + H2O = 2-oxoglutarate + NH4(+) + NADPH + H(+). This Schizosaccharomyces pombe (strain 972 / ATCC 24843) (Fission yeast) protein is NADP-specific glutamate dehydrogenase (gdh1).